The following is a 299-amino-acid chain: Peroxisomal biogenesis factor 19 (299 aa).

Residues 1–63 (MAAAEEGCSV…SPGDTAKDAL (63 aa)) are disordered. A2 carries the N-acetylalanine modification. The interval 2 to 56 (AAAEEGCSVGAEADRELEELLESALDDFDKAKPSPAPPSTTTAPDASGPQKRSPG) is docking to the peroxisome membrane and binding to PEX3. Residues 2 to 91 (AAAEEGCSVG…QATAEFEKAM (90 aa)) are necessary for PEX19 function on peroxisome biogenesis. Residues 16–27 (RELEELLESALD) are compositionally biased toward acidic residues. Phosphoserine occurs at positions 35, 54, and 66. The residue at position 236 (T236) is a Phosphothreonine. C296 carries the cysteine methyl ester modification. C296 is lipidated: S-farnesyl cysteine. A propeptide spans 297 to 299 (LIM) (removed in mature form).

The protein belongs to the peroxin-19 family. As to quaternary structure, interacts with a broad range of peroxisomal membrane proteins, including PEX3, PEX10, PEX11A, PEX11B, PEX12, PEX13, PEX14 and PEX16, PXMP2/PMP22, PXMP4/PMP24, SLC25A17/PMP34, ABCD1/ALDP, ABCD2/ALDRP, and ABCD3/PMP70. Also interacts with the tumor suppressor CDKN2A/p19ARF. In terms of assembly, (Microbial infection) Interacts with human cytomegalovirus protein UL37 isoform vMIA; this interaction inhibits the peroxisomal-dependent antiviral signaling. Ubiquitously expressed. Isoform 1 is strongly predominant in all tissues except in utero where isoform 2 is the main form.

It is found in the cytoplasm. The protein resides in the peroxisome membrane. Its function is as follows. Necessary for early peroxisomal biogenesis. Acts both as a cytosolic chaperone and as an import receptor for peroxisomal membrane proteins (PMPs). Binds and stabilizes newly synthesized PMPs in the cytoplasm by interacting with their hydrophobic membrane-spanning domains, and targets them to the peroxisome membrane by binding to the integral membrane protein PEX3. Excludes CDKN2A from the nucleus and prevents its interaction with MDM2, which results in active degradation of TP53. The sequence is that of Peroxisomal biogenesis factor 19 from Homo sapiens (Human).